A 922-amino-acid chain; its full sequence is Lysine-specific demethylase 7A (922 aa).

A PHD-type zinc finger spans residues 6–57 (PVYCVCRQPYDVSRFMIECDICKDWFHSSCVKVEEHQAADIDLYHCPNCEVL). The JmjC domain occupies 199-355 (FSDTKMADLV…MQLRCYEMEK (157 aa)). Thr-248 contributes to the substrate binding site. Fe cation contacts are provided by His-251 and Asp-253. Substrate is bound at residue Lys-268. Residue His-323 participates in Fe cation binding. Disordered stretches follow at residues 445–490 (EEEG…TKTP), 565–607 (RSLY…TQKP), 622–711 (GSSE…EQEA), 754–773 (GKEHLDSHSHKAANSDHHVK), and 872–902 (LHPTKRPASNPPPISNQATKGKRPKKGMATA). The span at 473–483 (HHSGRKARRLR) shows a compositional bias: basic residues. Acidic residues predominate over residues 648 to 666 (ESESSGDDDDEEEEEEEER). Basic and acidic residues-rich tracts occupy residues 667-683 (QEPIRNLKEEHSGRRLP) and 691-701 (PDHDSPQKREC).

This sequence belongs to the JHDM1 histone demethylase family. JHDM1D subfamily. It depends on Fe(2+) as a cofactor.

It is found in the nucleus. Histone demethylase required for brain development. Specifically demethylates dimethylated 'Lys-9' and 'Lys-27' (H3K9me2 and H3K27me2, respectively) of histone H3 and monomethylated histone H4 'Lys-20' residue (H4K20Me1), thereby playing a central role in histone code. This is Lysine-specific demethylase 7A (kdm7a) from Xenopus tropicalis (Western clawed frog).